The chain runs to 201 residues: MLTHLRPALVLLTALTAITGLAYPLAMTGLAGAIFPARAAGSLIERDGRIVGSALIGQSFSQAHYFHGRPSVTTATDPADAGKTVPAPYNAANSMGSNLGPTSAVLAERVKGDLAALSAENPGAPVPVDLVTTSGSGLDPDIAPEAALFQVPRVARARGMPEDRLRALVTAQVEGRTFGVLGERRVNVLALNLAVDELARR.

A helical transmembrane segment spans residues 7 to 29 (PALVLLTALTAITGLAYPLAMTG).

It belongs to the KdpC family. In terms of assembly, the system is composed of three essential subunits: KdpA, KdpB and KdpC.

The protein resides in the cell inner membrane. Its function is as follows. Part of the high-affinity ATP-driven potassium transport (or Kdp) system, which catalyzes the hydrolysis of ATP coupled with the electrogenic transport of potassium into the cytoplasm. This subunit acts as a catalytic chaperone that increases the ATP-binding affinity of the ATP-hydrolyzing subunit KdpB by the formation of a transient KdpB/KdpC/ATP ternary complex. This is Potassium-transporting ATPase KdpC subunit from Methylorubrum populi (strain ATCC BAA-705 / NCIMB 13946 / BJ001) (Methylobacterium populi).